The following is a 315-amino-acid chain: Acetyl-coenzyme A carboxylase carboxyl transferase subunit alpha (315 aa).

Positions 40 to 293 constitute a CoA carboxyltransferase C-terminal domain; the sequence is LQDKSKTLTE…RAELSSQLAM (254 aa).

It belongs to the AccA family. In terms of assembly, acetyl-CoA carboxylase is a heterohexamer composed of biotin carboxyl carrier protein (AccB), biotin carboxylase (AccC) and two subunits each of ACCase subunit alpha (AccA) and ACCase subunit beta (AccD).

The protein localises to the cytoplasm. The catalysed reaction is N(6)-carboxybiotinyl-L-lysyl-[protein] + acetyl-CoA = N(6)-biotinyl-L-lysyl-[protein] + malonyl-CoA. Its pathway is lipid metabolism; malonyl-CoA biosynthesis; malonyl-CoA from acetyl-CoA: step 1/1. Functionally, component of the acetyl coenzyme A carboxylase (ACC) complex. First, biotin carboxylase catalyzes the carboxylation of biotin on its carrier protein (BCCP) and then the CO(2) group is transferred by the carboxyltransferase to acetyl-CoA to form malonyl-CoA. This chain is Acetyl-coenzyme A carboxylase carboxyl transferase subunit alpha, found in Pseudomonas fluorescens (strain Pf0-1).